A 307-amino-acid chain; its full sequence is Nucleotide-binding protein Sca_0414 (307 aa).

19-26 lines the ATP pocket; the sequence is GMSGAGKS. Residue 70-73 coordinates GTP; it reads DLRG.

The protein belongs to the RapZ-like family.

In terms of biological role, displays ATPase and GTPase activities. The sequence is that of Nucleotide-binding protein Sca_0414 from Staphylococcus carnosus (strain TM300).